The chain runs to 208 residues: MNDALALLLSMLVSAIAFAVLFPPTAPWLKKRLFADLRHQAVAACHARLAGLRTRFESGARDLMYQAHTLSADHPTCSATPCWMFAVLETGNAAIDLRHELATLPSDPRYAPTTPWRRAIETMRAALSSLFARPDAERFDATLAAVNDAIDATRQTLDAFTPTREERHRLQRILSHLHFVRTALLDPESPLAALNRNRPVRPQPGASS.

The chain crosses the membrane as a helical span at residues 7 to 29 (LLLSMLVSAIAFAVLFPPTAPWL).

It is found in the cell membrane. Involved in the resistance (detoxification) of the fungal toxin fusaric acid. The chain is Fusaric acid resistance protein FusD (fusD) from Burkholderia cepacia (Pseudomonas cepacia).